A 401-amino-acid polypeptide reads, in one-letter code: Exodeoxyribonuclease 7 large subunit (401 aa).

The protein belongs to the XseA family. In terms of assembly, heterooligomer composed of large and small subunits.

It is found in the cytoplasm. It carries out the reaction Exonucleolytic cleavage in either 5'- to 3'- or 3'- to 5'-direction to yield nucleoside 5'-phosphates.. Functionally, bidirectionally degrades single-stranded DNA into large acid-insoluble oligonucleotides, which are then degraded further into small acid-soluble oligonucleotides. The sequence is that of Exodeoxyribonuclease 7 large subunit from Clostridium botulinum (strain Loch Maree / Type A3).